The sequence spans 329 residues: Delta(7)-sterol 5(6)-desaturase erg32 (329 aa).

2 helical membrane passes run Leu67 to Tyr87 and Phe149 to Ile169. The Fatty acid hydroxylase domain maps to Ala156–Ser281. The short motif at His170–His175 is the Histidine box-1 element. The Histidine box-2 signature appears at His183–His187. Residues Leu210–Phe230 form a helical membrane-spanning segment. The Histidine box-3 motif lies at His257–His262.

The protein belongs to the sterol desaturase family. Fe cation is required as a cofactor.

Its subcellular location is the endoplasmic reticulum membrane. It is found in the golgi apparatus membrane. The catalysed reaction is episterol + 2 Fe(II)-[cytochrome b5] + O2 + 2 H(+) = 5-dehydroepisterol + 2 Fe(III)-[cytochrome b5] + 2 H2O. Its pathway is steroid metabolism; ergosterol biosynthesis. In terms of biological role, C-5 sterol desaturase; part of the third module of ergosterol biosynthesis pathway that includes by the late steps of the pathway. Erg31 and erg32 catalyze the introduction of a C-5 double bond in the B ring to produce 5-dehydroepisterol. The third module or late pathway involves the ergosterol synthesis itself through consecutive reactions that mainly occur in the endoplasmic reticulum (ER) membrane. Firstly, the squalene synthase erg9 catalyzes the condensation of 2 farnesyl pyrophosphate moieties to form squalene, which is the precursor of all steroids. Secondly, squalene is converted into lanosterol by the consecutive action of the squalene epoxidase erg1 and the lanosterol synthase erg7. The lanosterol 14-alpha-demethylase erg11/cyp1 catalyzes C14-demethylation of lanosterol to produce 4,4'-dimethyl cholesta-8,14,24-triene-3-beta-ol. In the next steps, a complex process involving various demethylation, reduction and desaturation reactions catalyzed by the C-14 reductase erg24 and the C-4 demethylation complex erg25-erg26-erg27 leads to the production of zymosterol. Erg28 likely functions in the C-4 demethylation complex reaction by tethering erg26 and Erg27 to the endoplasmic reticulum or to facilitate interaction between these proteins. Then, the sterol 24-C-methyltransferase erg6 catalyzes the methyl transfer from S-adenosyl-methionine to the C-24 of zymosterol to form fecosterol. The C-8 sterol isomerase erg2 catalyzes the reaction which results in unsaturation at C-7 in the B ring of sterols and thus converts fecosterol to episterol. The sterol-C5-desaturases erg31 and erg32 then catalyze the introduction of a C-5 double bond in the B ring to produce 5-dehydroepisterol. The C-22 sterol desaturase erg5 further converts 5-dehydroepisterol into ergosta-5,7,22,24(28)-tetraen-3beta-ol by forming the C-22(23) double bond in the sterol side chain. Finally, ergosta-5,7,22,24(28)-tetraen-3beta-ol is substrate of the C-24(28) sterol reductase erg4 to produce ergosterol. In the genus Schizosaccharomyces, a second route exists between lanosterol and fecosterol, via the methylation of lanosterol to eburicol by erg6, followed by C14-demethylation by erg11/cyp1 and C4-demethylation by the demethylation complex erg25-erg26-erg27. In Schizosaccharomyces pombe (strain 972 / ATCC 24843) (Fission yeast), this protein is Delta(7)-sterol 5(6)-desaturase erg32.